We begin with the raw amino-acid sequence, 146 residues long: Hemoglobin subunit beta (146 aa).

Val1 bears the N-acetylvaline mark. A Globin domain is found at 2 to 146 (HLTADEKAAV…VATALAHKYH (145 aa)). The residue at position 12 (Thr12) is a Phosphothreonine. Phosphoserine is present on Ser44. Lys59 carries the N6-acetyllysine modification. A heme b-binding site is contributed by His63. N6-acetyllysine is present on Lys82. His92 serves as a coordination point for heme b. Cys93 is subject to S-nitrosocysteine. At Lys144 the chain carries N6-acetyllysine.

It belongs to the globin family. Heterotetramer of two alpha chains and two beta chains. As to expression, red blood cells.

Its function is as follows. Involved in oxygen transport from the lung to the various peripheral tissues. This chain is Hemoglobin subunit beta (HBB), found in Cephalopachus bancanus (Western tarsier).